The sequence spans 230 residues: MKIDNMTKLAKFVKRPNRFQAYIELEGEEMMVHVPNTGRCREILLPNCTVVLREENNPNRKTKYDLIGAYKGEKFINIDSQIPNKVVYEALYNKKVESLAKYNIIMKEKTFKNSRFDFRLENDEGEVYFLEVKGVTLEDKGVARFPDAPTERGAKHLKELVEAKKSGYGAGVLFLMQMDNISEFRPHDEMDKMFGEALRYAAINGVDVMAYECSVDEKSITLTKSVKIVL.

Belongs to the SfsA family.

The sequence is that of Sugar fermentation stimulation protein homolog from Clostridium acetobutylicum (strain ATCC 824 / DSM 792 / JCM 1419 / IAM 19013 / LMG 5710 / NBRC 13948 / NRRL B-527 / VKM B-1787 / 2291 / W).